The chain runs to 102 residues: Small ribosomal subunit protein uS10 (102 aa).

This sequence belongs to the universal ribosomal protein uS10 family. As to quaternary structure, part of the 30S ribosomal subunit.

In terms of biological role, involved in the binding of tRNA to the ribosomes. This is Small ribosomal subunit protein uS10 from Streptococcus uberis (strain ATCC BAA-854 / 0140J).